The chain runs to 1225 residues: DNA-directed RNA polymerase subunit beta' (1225 aa).

The Zn(2+) site is built by Cys60, Cys62, Cys75, and Cys78. Mg(2+) contacts are provided by Asp450, Asp452, and Asp454. 4 residues coordinate Zn(2+): Cys818, Cys892, Cys899, and Cys902.

The protein belongs to the RNA polymerase beta' chain family. The RNAP catalytic core consists of 2 alpha, 1 beta, 1 beta' and 1 omega subunit. When a sigma factor is associated with the core the holoenzyme is formed, which can initiate transcription. It depends on Mg(2+) as a cofactor. Zn(2+) serves as cofactor.

The enzyme catalyses RNA(n) + a ribonucleoside 5'-triphosphate = RNA(n+1) + diphosphate. DNA-dependent RNA polymerase catalyzes the transcription of DNA into RNA using the four ribonucleoside triphosphates as substrates. The protein is DNA-directed RNA polymerase subunit beta' of Streptococcus pneumoniae (strain ATCC 700669 / Spain 23F-1).